The sequence spans 172 residues: Interferon tau-3 (172 aa).

Disulfide bonds link cysteine 1/cysteine 99 and cysteine 29/cysteine 139.

Belongs to the alpha/beta interferon family. IFN-alphaII subfamily. As to expression, constitutively and exclusively expressed in the mononuclear cells of the extraembryonic trophectoderm.

Its subcellular location is the secreted. Paracrine hormone primarily responsible for maternal recognition of pregnancy. Interacts with endometrial receptors, probably type I interferon receptors, and blocks estrogen receptor expression, preventing the estrogen-induced increase in oxytocin receptor expression in the endometrium. This results in the suppression of the pulsatile endometrial release of the luteolytic hormone prostaglandin F2-alpha, hindering the regression of the corpus luteum (luteolysis) and therefore a return to ovarian cyclicity. This, and a possible direct effect of IFN-tau on prostaglandin synthesis, leads in turn to continued ovarian progesterone secretion, which stimulates the secretion by the endometrium of the nutrients required for the growth of the conceptus. In summary, displays particularly high antiviral and antiproliferative potency concurrently with particular weak cytotoxicity, high antiluteolytic activity and immunomodulatory properties. In contrast with other IFNs, IFN-tau is not virally inducible. The sequence is that of Interferon tau-3 (IFNT3) from Ovis aries (Sheep).